The primary structure comprises 453 residues: Serine incorporator 1 (453 aa).

Gly-2 is lipidated: N-myristoyl glycine. Residues 2-39 (GSVLGLCSVASWIPCLCGSAPCLLCRCCPSGNNSTVTR) are Cytoplasmic-facing. The chain crosses the membrane as a helical span at residues 40–60 (LIYALFLLVGVCVACVMLIPG). Topologically, residues 61–88 (MEEQLNKIPGFCENEKGVVPCNILVGYK) are lumenal. The chain crosses the membrane as a helical span at residues 89 to 109 (AVYRLCFGLAMFYLLLSLLMI). Residues 110 to 123 (KVKSSSDPRAAVHN) are Cytoplasmic-facing. A helical transmembrane segment spans residues 124–144 (GFWFFKFATAVAIIIGAFFIP). Residues 145–151 (EGTFTTV) are Lumenal-facing. The helical transmembrane segment at 152-172 (WFYVGMAGAFCFILIQLVLLI) threads the bilayer. At 173–197 (DFAHSWNESWVEKMEEGNSRCWYAA) the chain is on the cytoplasmic side. A helical membrane pass occupies residues 198 to 218 (LLSATALNYLLSLVAVVLFFV). The Lumenal segment spans residues 219–231 (YYTHPASCAENKA). Residues 232–252 (FISVNMLLCIGASVMSILPKI) traverse the membrane as a helical segment. The Cytoplasmic portion of the chain corresponds to 253–259 (QESQPRS). Residues 260–280 (GLLQSSVITVYTMYLTWSAMT) form a helical membrane-spanning segment. The Lumenal portion of the chain corresponds to 281 to 309 (NEPETNCNPSLLSIIGFNTTRPIPKDGQS). The helical transmembrane segment at 310-330 (VQWWHPQGIIGLVLFLLCVFY) threads the bilayer. At 331-387 (SSIRTSNNSQVNKLTLTSDESTLIEDGNGRSDGSLDDGDGIHRAVDNERDGVTYSYS) the chain is on the cytoplasmic side. Residue Ser-351 is modified to Phosphoserine. The residue at position 352 (Thr-352) is a Phosphothreonine. 2 positions are modified to phosphoserine: Ser-361 and Ser-364. A helical transmembrane segment spans residues 388-408 (FFHFMLFLASLYIMMTLTNWY). The Lumenal portion of the chain corresponds to 409–426 (RYEPSREMKSQWTAVWVK). Residues 427–447 (ISSSWIGLVLYVWTLVAPLVL) form a helical membrane-spanning segment. Over 448-453 (TNRDFD) the chain is Cytoplasmic.

This sequence belongs to the TDE1 family. Interacts with SPTLC1. As to expression, highly expressed in the neuronal populations such as Purkinje cells in the cerebellum, brainstem and spinal motor neurons, locus coeruleus and raphe nuclei.

The protein localises to the endoplasmic reticulum membrane. In terms of biological role, enhances the incorporation of serine into phosphatidylserine and sphingolipids. This chain is Serine incorporator 1 (Serinc1), found in Mus musculus (Mouse).